Reading from the N-terminus, the 360-residue chain is Phospho-N-acetylmuramoyl-pentapeptide-transferase (360 aa).

The next 10 helical transmembrane spans lie at 25–45 (RGIL…PWMI), 73–93 (TMGG…WADL), 97–117 (YVWV…VDDY), 135–155 (FWQS…APSA), 170–190 (IPLG…SSNA), 199–219 (GLAI…CYLS), 236–256 (AGEL…FLWF), 263–283 (VFMG…MAVI), 288–308 (MVLF…VIQV), and 338–358 (VIVR…ATLK).

This sequence belongs to the glycosyltransferase 4 family. MraY subfamily. It depends on Mg(2+) as a cofactor.

Its subcellular location is the cell inner membrane. It carries out the reaction UDP-N-acetyl-alpha-D-muramoyl-L-alanyl-gamma-D-glutamyl-meso-2,6-diaminopimeloyl-D-alanyl-D-alanine + di-trans,octa-cis-undecaprenyl phosphate = di-trans,octa-cis-undecaprenyl diphospho-N-acetyl-alpha-D-muramoyl-L-alanyl-D-glutamyl-meso-2,6-diaminopimeloyl-D-alanyl-D-alanine + UMP. It participates in cell wall biogenesis; peptidoglycan biosynthesis. Functionally, catalyzes the initial step of the lipid cycle reactions in the biosynthesis of the cell wall peptidoglycan: transfers peptidoglycan precursor phospho-MurNAc-pentapeptide from UDP-MurNAc-pentapeptide onto the lipid carrier undecaprenyl phosphate, yielding undecaprenyl-pyrophosphoryl-MurNAc-pentapeptide, known as lipid I. In Pseudomonas syringae pv. syringae (strain B728a), this protein is Phospho-N-acetylmuramoyl-pentapeptide-transferase.